Consider the following 480-residue polypeptide: Chromosomal replication initiator protein DnaA (480 aa).

The domain I, interacts with DnaA modulators stretch occupies residues 1–71; the sequence is MRHDALFERV…TTLVQQEDSE (71 aa). The domain II stretch occupies residues 71–137; sequence EILKVEILVR…RPVQAPLFGS (67 aa). Residues 138 to 360 form a domain III, AAA+ region region; that stretch reads PLDQRYGFDS…GAFNQLLFRR (223 aa). ATP contacts are provided by glycine 184, glycine 186, lysine 187, and threonine 188. Positions 361–480 are domain IV, binds dsDNA; that stretch reads SFEPQLSIER…IELLKRLINE (120 aa).

Belongs to the DnaA family. As to quaternary structure, oligomerizes as a right-handed, spiral filament on DNA at oriC.

Its subcellular location is the cytoplasm. In terms of biological role, plays an essential role in the initiation and regulation of chromosomal replication. ATP-DnaA binds to the origin of replication (oriC) to initiate formation of the DNA replication initiation complex once per cell cycle. Binds the DnaA box (a 9 base pair repeat at the origin) and separates the double-stranded (ds)DNA. Forms a right-handed helical filament on oriC DNA; dsDNA binds to the exterior of the filament while single-stranded (ss)DNA is stabiized in the filament's interior. The ATP-DnaA-oriC complex binds and stabilizes one strand of the AT-rich DNA unwinding element (DUE), permitting loading of DNA polymerase. After initiation quickly degrades to an ADP-DnaA complex that is not apt for DNA replication. Binds acidic phospholipids. The chain is Chromosomal replication initiator protein DnaA from Rhizobium meliloti (strain 1021) (Ensifer meliloti).